A 348-amino-acid polypeptide reads, in one-letter code: Dihydroorotase (348 aa).

Positions 14 and 16 each coordinate Zn(2+). Substrate is bound by residues 16–18 (HLR) and Asn42. The Zn(2+) site is built by Lys100, His137, and His175. Lys100 is modified (N6-carboxylysine). His137 contacts substrate. Leu220 lines the substrate pocket. Asp248 provides a ligand contact to Zn(2+). Asp248 is a catalytic residue. Substrate is bound by residues His252 and Ala264.

It belongs to the metallo-dependent hydrolases superfamily. DHOase family. Class II DHOase subfamily. In terms of assembly, homodimer. It depends on Zn(2+) as a cofactor.

It carries out the reaction (S)-dihydroorotate + H2O = N-carbamoyl-L-aspartate + H(+). The protein operates within pyrimidine metabolism; UMP biosynthesis via de novo pathway; (S)-dihydroorotate from bicarbonate: step 3/3. Its function is as follows. Catalyzes the reversible cyclization of carbamoyl aspartate to dihydroorotate. This chain is Dihydroorotase, found in Pseudomonas aeruginosa (strain LESB58).